A 155-amino-acid polypeptide reads, in one-letter code: Ribosome maturation factor RimP (155 aa).

Belongs to the RimP family.

It localises to the cytoplasm. In terms of biological role, required for maturation of 30S ribosomal subunits. The chain is Ribosome maturation factor RimP from Staphylococcus haemolyticus (strain JCSC1435).